Consider the following 2231-residue polypeptide: Helicase SEN1 (2231 aa).

Residues 1–17 (MNSNNPDNNNSNNINNN) show a composition bias toward low complexity. 2 disordered regions span residues 1-24 (MNSN…KDIA) and 1032-1061 (HPPS…SDND). ATP is bound by residues Q1339 and 1360–1364 (GTGKT). Residues 1491 to 1511 (ELRGKLDSESGNPESPMSTED) form a disordered region. The span at 1499–1510 (ESGNPESPMSTE) shows a compositional bias: polar residues. ATP-binding residues include Q1619, Y1655, and E1787. 2 disordered regions span residues 1894-1993 (ITQG…AVVG) and 2032-2231 (QLGL…KPRS). Residues 1909–1927 (KRRVVDEGEEADKAVKKKK) carry the Nuclear localization signal motif. Residues 1923 to 1937 (VKKKKKEKKKEKKKS) are compositionally biased toward basic residues. Over residues 1938-1950 (KADDKKKNNKKAE) the composition is skewed to basic and acidic residues. A compositionally biased stretch (acidic residues) spans 2048 to 2058 (NNEDDDDEDDY). 2 stretches are compositionally biased toward polar residues: residues 2060 to 2088 (PSIS…NFSA) and 2095 to 2104 (QVSQAKQTQV). Positions 2114-2123 (SNSVLSGGSS) are enriched in low complexity. Polar residues predominate over residues 2134–2160 (PNQNGQNGANRTLSQHVGNANQYSTAP). Low complexity predominate over residues 2210 to 2220 (RNSSRRNASSS).

It belongs to the DNA2/NAM7 helicase family. Interacts with RAD2, RNT1 and RPB1. Binds to multiple snoRNAs.

It localises to the nucleus. ATP-dependent 5'-&gt;3' DNA/RNA helicase required for the expression and maturation of diverse classes of non-protein-coding RNAs like precursor tRNAs, rRNAs and small nuclear (snRNA) and nucleolar (snoRNA) RNAs. Directs RNA polymerase II transcription termination on snoRNAs as well as on several short protein-coding genes. May also play a role in transcription-coupled nucleotide excision repair. The sequence is that of Helicase SEN1 (SEN1) from Saccharomyces cerevisiae (strain ATCC 204508 / S288c) (Baker's yeast).